The following is an 831-amino-acid chain: Multiphosphoryl transfer protein 1 (831 aa).

The region spanning 1–90 (MLTIQFLCPL…EYIQVRFIDS (90 aa)) is the HPr domain. The active-site Pros-phosphohistidine intermediate; for HPr activity is histidine 15. Histidine 15 carries the phosphohistidine; by EI modification. Positions 119 to 650 (GNVLASGVGV…AVKSQLRQLD (532 aa)) are PTS EI. The active-site Tele-phosphohistidine intermediate; for PTS EI activity is histidine 298. At histidine 298 the chain carries Phosphohistidine; by autocatalysis. Phosphoenolpyruvate-binding residues include arginine 405 and arginine 441. Positions 540 and 564 each coordinate Mg(2+). Residues 563 to 564 (ND) and arginine 574 each bind phosphoenolpyruvate. Cysteine 611 (proton donor; for EI activity) is an active-site residue. One can recognise a PTS EIIA type-2 domain in the interval 685 to 828 (PLLALENIFV…QSILTLLETE (144 aa)). Histidine 747 functions as the Tele-phosphohistidine intermediate; for PTS EIIA activity in the catalytic mechanism. Histidine 747 carries the post-translational modification Phosphohistidine; by HPr.

The protein belongs to the PEP-utilizing enzyme family. It depends on Mg(2+) as a cofactor.

Its subcellular location is the cytoplasm. It catalyses the reaction L-histidyl-[protein] + phosphoenolpyruvate = N(pros)-phospho-L-histidyl-[protein] + pyruvate. The enzyme catalyses D-fructose(out) + N(pros)-phospho-L-histidyl-[protein] = D-fructose 1-phosphate(in) + L-histidyl-[protein]. Its function is as follows. Multifunctional protein that includes general (non sugar-specific) and sugar-specific components of the phosphoenolpyruvate-dependent sugar phosphotransferase system (sugar PTS). This major carbohydrate active transport system catalyzes the phosphorylation of incoming sugar substrates concomitantly with their translocation across the cell membrane. The enzyme II FryABC PTS system is involved in fructose transport. The chain is Multiphosphoryl transfer protein 1 (fryA) from Escherichia coli (strain K12).